The chain runs to 304 residues: GTPase Era (304 aa).

Positions 9–177 (HSGFVAIVGR…VTTLSQHMPE (169 aa)) constitute an Era-type G domain. The tract at residues 17-24 (GRPNVGKS) is G1. 17–24 (GRPNVGKS) lines the GTP pocket. Residues 43–47 (QTTRN) form a G2 region. The tract at residues 64–67 (DTPG) is G3. GTP is bound by residues 64-68 (DTPGI) and 127-130 (NKID). The interval 127–130 (NKID) is G4. Residues 156-158 (ISA) are G5. Positions 208–285 (TRQEVPHSVA…YLELWVKVSE (78 aa)) constitute a KH type-2 domain.

The protein belongs to the TRAFAC class TrmE-Era-EngA-EngB-Septin-like GTPase superfamily. Era GTPase family. As to quaternary structure, monomer.

Its subcellular location is the cytoplasm. It localises to the cell membrane. Its function is as follows. An essential GTPase that binds both GDP and GTP, with rapid nucleotide exchange. Plays a role in 16S rRNA processing and 30S ribosomal subunit biogenesis and possibly also in cell cycle regulation and energy metabolism. This Pediococcus pentosaceus (strain ATCC 25745 / CCUG 21536 / LMG 10740 / 183-1w) protein is GTPase Era.